The primary structure comprises 529 residues: Plexin domain-containing protein 2 (529 aa).

A signal peptide spans 1–30 (MARFPKADLAAAGVMLLCHFFTDQFQFADG). Over 31-454 (KPGDQILDWQ…AEKKGGTLHA (424 aa)) the chain is Extracellular. Residues 80–104 (ASVGQDSPEPRSFTDLLLDDGQDNN) form a disordered region. Residues Asn103 and Asn160 are each glycosylated (N-linked (GlcNAc...) asparagine). The region spanning 327 to 372 (TCLQFNRCGPCVSSQIGFNCSWCSKLQRCSSGFDRHRQDWVDSGCP) is the PSI domain. The chain crosses the membrane as a helical span at residues 455 to 475 (GLIIGILILVLIVATAILVTV). Over 476–529 (YMYHHPTSAASIFFIERRPSRWPAMKFRRGSGHPAYAEVEPVGEKEGFIVSEQC) the chain is Cytoplasmic. Ser506 is modified (phosphoserine).

The protein belongs to the plexin family. In terms of assembly, interacts with CTTN. As to expression, expressed in the endothelial cells of the stroma but not in the endothelial cells of normal colonic tissue.

It is found in the membrane. May play a role in tumor angiogenesis. The sequence is that of Plexin domain-containing protein 2 (PLXDC2) from Homo sapiens (Human).